The chain runs to 154 residues: MYFVIKGDSIMYFVLRLGGDLSLYIPAKYRPFFEPLDKNSPYNIKVNLENSSGDIVVDNVLDDKKIDERNSEITKLGGLINELRRKKENGDNINIIEIRLKLKDDSIITHNLNTPNIEDYDDNKLVINSGTLVINGKTTIDLNNIEEITLKLDI.

This is an uncharacterized protein from Methanocaldococcus jannaschii (strain ATCC 43067 / DSM 2661 / JAL-1 / JCM 10045 / NBRC 100440) (Methanococcus jannaschii).